The sequence spans 224 residues: MLYIVGTPIGNLEDITYRAVDVLKSVNVIFAEDTRVTIKLLSRYKINKKMISCNAVTENKKIRLLLDYLAKGDSVAFVSDAGTPGLSDPGSLLVAAAFREGYKVCPIPGVSSFNTIVSVNPFRDKSVLFEGFLPNKGLKRFKKIAELYKRGDAFVLLESGHRLLKLLVEISSVSLDAKILIGREMTKIYEEYQIGKPLELKKYFESSKEKVKGEFTILVSRSSS.

It belongs to the methyltransferase superfamily. RsmI family.

Its subcellular location is the cytoplasm. The catalysed reaction is cytidine(1402) in 16S rRNA + S-adenosyl-L-methionine = 2'-O-methylcytidine(1402) in 16S rRNA + S-adenosyl-L-homocysteine + H(+). Catalyzes the 2'-O-methylation of the ribose of cytidine 1402 (C1402) in 16S rRNA. The polypeptide is Ribosomal RNA small subunit methyltransferase I (Borrelia garinii subsp. bavariensis (strain ATCC BAA-2496 / DSM 23469 / PBi) (Borreliella bavariensis)).